The primary structure comprises 277 residues: uncharacterized protein (277 aa).

Residue 32 to 39 participates in ATP binding; that stretch reads GPQGSGKS.

Belongs to the GLYK kinase family.

The protein resides in the cytoplasm. It is found in the nucleus. Its function is as follows. Has a role in meiosis. This is an uncharacterized protein from Schizosaccharomyces pombe (strain 972 / ATCC 24843) (Fission yeast).